Reading from the N-terminus, the 375-residue chain is Growth/differentiation factor 8 (375 aa).

Positions 1 to 18 (MQKLQIFVYIYLFMLTVA) are cleaved as a signal peptide. A propeptide spanning residues 19–266 (GPVDLNENSE…VTDTPKRARR (248 aa)) is cleaved from the precursor. Asn48 and Asn71 each carry an N-linked (GlcNAc...) asparagine glycan. Cystine bridges form between Cys272–Cys282, Cys281–Cys340, Cys309–Cys372, and Cys313–Cys374.

It belongs to the TGF-beta family. Homodimer; disulfide-linked. Interacts with WFIKKN2, leading to inhibit its activity. Interacts with FSTL3. Synthesized as large precursor molecule that undergoes proteolytic cleavage to generate an N-terminal propeptide and a disulfide linked C-terminal dimer, which is the biologically active molecule. The circulating form consists of a latent complex of the C-terminal dimer and other proteins, including its propeptide, which maintain the C-terminal dimer in a latent, inactive state. Ligand activation requires additional cleavage of the prodomain by a tolloid-like metalloproteinase.

The protein resides in the secreted. Acts specifically as a negative regulator of skeletal muscle growth. This Sylvicapra grimmia (Grey duiker) protein is Growth/differentiation factor 8 (MSTN).